Here is a 348-residue protein sequence, read N- to C-terminus: Inositol 2-dehydrogenase/D-chiro-inositol 3-dehydrogenase (348 aa).

This sequence belongs to the Gfo/Idh/MocA family. As to quaternary structure, homotetramer.

It catalyses the reaction myo-inositol + NAD(+) = scyllo-inosose + NADH + H(+). It carries out the reaction 1D-chiro-inositol + NAD(+) = scyllo-inosine + NADH + H(+). It functions in the pathway polyol metabolism; myo-inositol degradation into acetyl-CoA; acetyl-CoA from myo-inositol: step 1/7. In terms of biological role, involved in the oxidation of myo-inositol (MI) and D-chiro-inositol (DCI) to 2-keto-myo-inositol (2KMI or 2-inosose) and 1-keto-D-chiro-inositol (1KDCI), respectively. The polypeptide is Inositol 2-dehydrogenase/D-chiro-inositol 3-dehydrogenase (Halalkalibacterium halodurans (strain ATCC BAA-125 / DSM 18197 / FERM 7344 / JCM 9153 / C-125) (Bacillus halodurans)).